An 87-amino-acid chain; its full sequence is Apolipoprotein C-I (87 aa).

An N-terminal signal peptide occupies residues 1-26; the sequence is MRFILSLPVLAVVLAMVLEGPAPAQA.

It belongs to the apolipoprotein C1 family.

It is found in the secreted. In terms of biological role, inhibitor of lipoprotein binding to the low density lipoprotein (LDL) receptor, LDL receptor-related protein, and very low density lipoprotein (VLDL) receptor. Associates with high density lipoproteins (HDL) and the triacylglycerol-rich lipoproteins in the plasma and makes up about 10% of the protein of the VLDL and 2% of that of HDL. Appears to interfere directly with fatty acid uptake and is also the major plasma inhibitor of cholesteryl ester transfer protein (CETP). Binds free fatty acids and reduces their intracellular esterification. Modulates the interaction of APOE with beta-migrating VLDL and inhibits binding of beta-VLDL to the LDL receptor-related protein. The sequence is that of Apolipoprotein C-I (APOC1) from Pteropus alecto (Black flying fox).